A 190-amino-acid chain; its full sequence is NADH-quinone oxidoreductase subunit B (190 aa).

4 residues coordinate [4Fe-4S] cluster: Cys69, Cys70, Cys134, and Cys164.

It belongs to the complex I 20 kDa subunit family. As to quaternary structure, NDH-1 is composed of 14 different subunits. Subunits NuoB, C, D, E, F, and G constitute the peripheral sector of the complex. [4Fe-4S] cluster is required as a cofactor.

It is found in the cell inner membrane. It carries out the reaction a quinone + NADH + 5 H(+)(in) = a quinol + NAD(+) + 4 H(+)(out). Its function is as follows. NDH-1 shuttles electrons from NADH, via FMN and iron-sulfur (Fe-S) centers, to quinones in the respiratory chain. Couples the redox reaction to proton translocation (for every two electrons transferred, four hydrogen ions are translocated across the cytoplasmic membrane), and thus conserves the redox energy in a proton gradient. The sequence is that of NADH-quinone oxidoreductase subunit B from Chelativorans sp. (strain BNC1).